Here is a 667-residue protein sequence, read N- to C-terminus: MSLFVAVDNIDKVFSLTDGGEYIALKGINLEIKKGEFVSLIGHSGCGKSTLLNMIAGLDLPSEGIVTLEGQRIKQPGPDKMVIFQNYSLLPWLTVKQNIALAVDEVMKGASAAERKAIVEEHINLVGLGHAVDKRPGELSGGMKQRVAIARALAIRPKLLLLDEPFGALDALTRGNLQEQLMRICEQYQVTAVMVTHDVDEAVLLSDRIVMLTNGPGSNIGGILEVDIPRPRKRMEVVEHPSYYSLRSEIIYFLNQQKRIKKLRAKKTTAIARHGLEKVNLELGYVPLVACAPLVVAQEKGFFAKHGLDEVSLVRETSWRGIVDGIAGGYLDGAQMPAGMPTWLTAGGYREQSIPVVSALTMTRNGNAITLSKKLYDQGIYTAEDFRQLLLASDGDRHTLGMVHPSSMHNLLLRYWLAAHNINPDRDVHLKTIPPAQMVADLKAGTIDGYCVSEPWNLRASMEGAGFSIATDLEIWQNHPGKVLGVREDWAIAHPNTHVALVKALLEACAYCADPNHEMEIRELLATRQYLSTNIDYIHLGDPEGRTCRLGNPVEYSHHLFFGDQFNRPSRTEHLWMMTQMARWGDIPFPRNWVEILERVCRVGVFSTAARELGYDVNYQRQPIALFDGKVFNADDPIAYLNQTVIHRNFTIAEVHLDNPTPAPVFA.

An ABC transporter domain is found at 5–239 (VAVDNIDKVF…RPRKRMEVVE (235 aa)). 42–49 (GHSGCGKS) provides a ligand contact to ATP. The segment at 281–667 (LELGYVPLVA…DNPTPAPVFA (387 aa)) is cmpA-like.

The protein belongs to the ABC transporter superfamily. Nitrate/nitrite/cyanate uptake transporter (NitT) (TC 3.A.1.16) family. The complex is composed of two ATP-binding proteins (CmpC and CmpD), a transmembrane protein (CmpB) and a solute-binding protein (CmpA).

It is found in the cell inner membrane. Functionally, part of the ABC transporter complex CmpABCD involved in bicarbonate transport. Responsible for energy coupling to the transport system. This Synechocystis sp. (strain ATCC 27184 / PCC 6803 / Kazusa) protein is Bicarbonate transport ATP-binding protein CmpC (cmpC).